A 244-amino-acid polypeptide reads, in one-letter code: Putative quercetin 2,3-dioxygenase Mb0187c (244 aa).

Positions 60, 62, 104, and 106 each coordinate a divalent metal cation.

It belongs to the pirin family. A divalent metal cation is required as a cofactor.

It carries out the reaction quercetin + O2 = 2-(3,4-dihydroxybenzoyloxy)-4,6-dihydroxybenzoate + CO. The protein operates within flavonoid metabolism; quercetin degradation. Putative quercetin 2,3-dioxygenase. This chain is Putative quercetin 2,3-dioxygenase Mb0187c, found in Mycobacterium bovis (strain ATCC BAA-935 / AF2122/97).